Reading from the N-terminus, the 493-residue chain is GTPase Der (493 aa).

An EngA-type G 1 domain is found at 3-166 (PVIALVGRPN…EALGIFPKDN (164 aa)). GTP contacts are provided by residues 9-16 (GRPNVGKS), 56-60 (DTGGI), and 118-121 (NKVD). Positions 166–195 (NAEEEGEGEPASEEVAEGEEPTRIPGPSEK) are disordered. Acidic residues predominate over residues 167–184 (AEEEGEGEPASEEVAEGE). In terms of domain architecture, EngA-type G 2 spans 198–371 (IKIAIIGRPN…SVQESFRSAV (174 aa)). GTP contacts are provided by residues 204–211 (GRPNVGKS), 251–255 (DTAGV), and 316–319 (NKWD). The region spanning 372-456 (TRWPTSRLTS…PIRIEYKGGE (85 aa)) is the KH-like domain. Positions 454–463 (GGENPYEGKK) are enriched in basic and acidic residues. The tract at residues 454 to 493 (GGENPYEGKKNSLTARQVNKKRRLMSHHKKAEKKKKDKRR) is disordered. A compositionally biased stretch (basic residues) spans 471–493 (VNKKRRLMSHHKKAEKKKKDKRR).

It belongs to the TRAFAC class TrmE-Era-EngA-EngB-Septin-like GTPase superfamily. EngA (Der) GTPase family. Associates with the 50S ribosomal subunit.

In terms of biological role, GTPase that plays an essential role in the late steps of ribosome biogenesis. This chain is GTPase Der, found in Pseudomonas aeruginosa (strain UCBPP-PA14).